Consider the following 378-residue polypeptide: Chaperone protein DnaJ (378 aa).

One can recognise a J domain in the interval 6–70 (DYYDVLGVSR…QKRQQYDQFG (65 aa)). The CR-type zinc-finger motif lies at 137–219 (GKTSEISYSR…CHGKGVKTQK (83 aa)). Cys150, Cys153, Cys167, Cys170, Cys193, Cys196, Cys207, and Cys210 together coordinate Zn(2+). 4 CXXCXGXG motif repeats span residues 150-157 (CEVCKGSG), 167-174 (CDKCGGSG), 193-200 (CDKCTGSG), and 207-214 (CHNCHGKG).

Belongs to the DnaJ family. In terms of assembly, homodimer. It depends on Zn(2+) as a cofactor.

The protein resides in the cytoplasm. Participates actively in the response to hyperosmotic and heat shock by preventing the aggregation of stress-denatured proteins and by disaggregating proteins, also in an autonomous, DnaK-independent fashion. Unfolded proteins bind initially to DnaJ; upon interaction with the DnaJ-bound protein, DnaK hydrolyzes its bound ATP, resulting in the formation of a stable complex. GrpE releases ADP from DnaK; ATP binding to DnaK triggers the release of the substrate protein, thus completing the reaction cycle. Several rounds of ATP-dependent interactions between DnaJ, DnaK and GrpE are required for fully efficient folding. Also involved, together with DnaK and GrpE, in the DNA replication of plasmids through activation of initiation proteins. The sequence is that of Chaperone protein DnaJ from Lactobacillus delbrueckii subsp. bulgaricus (strain ATCC 11842 / DSM 20081 / BCRC 10696 / JCM 1002 / NBRC 13953 / NCIMB 11778 / NCTC 12712 / WDCM 00102 / Lb 14).